The following is a 337-amino-acid chain: Protein-arginine kinase (337 aa).

In terms of domain architecture, Phosphagen kinase C-terminal spans 8 to 239 (VVLSSRIRLA…KQIISSERRA (232 aa)). ATP contacts are provided by residues 11–15 (SSRIR), histidine 76, arginine 110, 161–165 (RASVM), and 192–197 (RGIYGE). An RDXXRA motif of the pArg binding pocket involved in allosteric regulation motif is present at residues 321-326 (RDVKRA).

This sequence belongs to the ATP:guanido phosphotransferase family.

It carries out the reaction L-arginyl-[protein] + ATP = N(omega)-phospho-L-arginyl-[protein] + ADP + H(+). With respect to regulation, appears to be allosterically activated by the binding of pArg-containing polypeptides to the pArg-binding pocket localized in the C-terminal domain of McsB. In terms of biological role, catalyzes the specific phosphorylation of arginine residues in proteins. In Caldanaerobacter subterraneus subsp. tengcongensis (strain DSM 15242 / JCM 11007 / NBRC 100824 / MB4) (Thermoanaerobacter tengcongensis), this protein is Protein-arginine kinase.